A 254-amino-acid polypeptide reads, in one-letter code: Membrane protein US20 (254 aa).

The next 7 membrane-spanning stretches (helical) occupy residues 31-51, 62-82, 89-109, 114-134, 143-163, 178-198, and 208-228; these read AIFI…WLGF, YSFF…YTLG, ATVL…FQMC, VLVG…GLAF, WKCI…LALL, AFSI…VIFF, and AVCL…MLSG.

It is found in the host membrane. The sequence is that of Membrane protein US20 (US20) from Homo sapiens (Human).